A 392-amino-acid polypeptide reads, in one-letter code: L-rhamnonate dehydratase (392 aa).

Substrate is bound by residues histidine 22 and arginine 48. 3 residues coordinate Mg(2+): aspartate 214, glutamate 240, and glutamate 268. Histidine 318 acts as the Proton acceptor in catalysis. Substrate is bound at residue glutamate 338.

The protein belongs to the mandelate racemase/muconate lactonizing enzyme family. RhamD subfamily. In terms of assembly, homooctamer; tetramer of dimers. The cofactor is Mg(2+).

It carries out the reaction L-rhamnonate = 2-dehydro-3-deoxy-L-rhamnonate + H2O. Functionally, catalyzes the dehydration of L-rhamnonate to 2-keto-3-deoxy-L-rhamnonate (KDR). This is L-rhamnonate dehydratase from Paraburkholderia xenovorans (strain LB400).